The following is a 161-amino-acid chain: Peptidyl-prolyl cis-trans isomerase (161 aa).

Residues 6 to 160 enclose the PPIase cyclophilin-type domain; sequence FFDIKAGDER…KKIIIEDCGE (155 aa).

This sequence belongs to the cyclophilin-type PPIase family. PPIase A subfamily. In terms of tissue distribution, found mainly in the tegument, gut epithelium, and muscle layers. Also found in the interior of the parasite.

It catalyses the reaction [protein]-peptidylproline (omega=180) = [protein]-peptidylproline (omega=0). Its activity is regulated as follows. Binds cyclosporin A (CsA). CsA mediates some of its effects via an inhibitory action on PPIase. Its function is as follows. PPIases accelerate the folding of proteins. It catalyzes the cis-trans isomerization of proline imidic peptide bonds in oligopeptides. The protein is Peptidyl-prolyl cis-trans isomerase of Schistosoma mansoni (Blood fluke).